The chain runs to 461 residues: Divalent metal cation transporter MntH (461 aa).

Helical transmembrane passes span 56–76 (AMAF…PGNW), 89–109 (TLLA…SLCA), 132–152 (AMVL…AEVI), 160–180 (LIFG…VFLI), 193–213 (ALVI…LALA), 230–250 (IVTN…TVMP), 285–305 (IALM…AATF), 322–342 (LLAP…ALLC), 378–398 (AIAI…GTGQ), 399–419 (LLIL…FPLV), and 433–453 (SPLW…ALNV).

Belongs to the NRAMP family.

The protein localises to the cell inner membrane. Its function is as follows. H(+)-stimulated, divalent metal cation uptake system. The polypeptide is Divalent metal cation transporter MntH (Agrobacterium fabrum (strain C58 / ATCC 33970) (Agrobacterium tumefaciens (strain C58))).